A 687-amino-acid polypeptide reads, in one-letter code: Complement C1s subcomponent (687 aa).

Residues 1–15 (MWCIVLLSLLAWVDA) form the signal peptide. The CUB 1 domain occupies 16–130 (EPTMYGEILS…TGFAAYYVAV (115 aa)). Residues glutamate 60, aspartate 68, aspartate 113, aspartate 131, valine 132, and glutamate 134 each coordinate Ca(2+). Cysteine 65 and cysteine 83 form a disulfide bridge. The EGF-like; calcium-binding domain maps to 131 to 172 (DVNECTDFADSPCSHFCNNYIGGYFCSCPPEYFLHEDKKNCG). Disulfide bonds link cysteine 135-cysteine 147, cysteine 143-cysteine 156, and cysteine 158-cysteine 171. Residues asparagine 149, tyrosine 150, and glycine 153 each contribute to the Ca(2+) site. (3R)-3-hydroxyasparagine is present on asparagine 149. N-linked (GlcNAc...) asparagine glycosylation occurs at asparagine 174. 9 disulfide bridges follow: cysteine 175–cysteine 202, cysteine 234–cysteine 251, cysteine 294–cysteine 341, cysteine 321–cysteine 354, cysteine 359–cysteine 403, cysteine 386–cysteine 421, cysteine 425–cysteine 548, cysteine 594–cysteine 617, and cysteine 626–cysteine 658. One can recognise a CUB 2 domain in the interval 175–290 (CSGDVFTTLI…KGWKFRYHGD (116 aa)). Sushi domains follow at residues 292–356 (IPCP…RCQP) and 357–423 (VDCG…KCVP). Asparagine 406 carries N-linked (GlcNAc...) asparagine glycosylation. The region spanning 438–679 (IFGGIITKIE…YIDWIRETMQ (242 aa)) is the Peptidase S1 domain. Active-site charge relay system residues include histidine 475 and aspartate 528. The active-site Charge relay system is serine 630.

Belongs to the peptidase S1 family. As to quaternary structure, C1 is a calcium-dependent trimolecular complex of C1q, C1r and C1s in the molar ration of 1:2:2. Activated C1s is an disulfide-linked heterodimer of a heavy chain and a light chain. In terms of processing, the iron and 2-oxoglutarate dependent 3-hydroxylation of aspartate and asparagine is (R) stereospecific within EGF domains.

The catalysed reaction is Cleavage of Arg-|-Ala bond in complement component C4 to form C4a and C4b, and Lys(or Arg)-|-Lys bond in complement component C2 to form C2a and C2b: the 'classical' pathway C3 convertase.. Its activity is regulated as follows. Inhibited by SERPING1. Its function is as follows. C1s B chain is a serine protease that combines with C1q and C1r to form C1, the first component of the classical pathway of the complement system. C1r activates C1s so that it can, in turn, activate C2 and C4. Also cleaves IGFBP5 and thereby inhibits the trophic effects of IGF1. In Sus scrofa (Pig), this protein is Complement C1s subcomponent.